The sequence spans 459 residues: GTPase Der (459 aa).

EngA-type G domains are found at residues 4-169 (PLVA…PEVA) and 179-355 (IAVA…AAHR). Residues 10–17 (GRPNVGKS), 57–61 (DTGGL), 120–123 (NKCE), 185–192 (GRPNVGKS), 232–236 (DTAGI), and 297–300 (NKWD) contribute to the GTP site. Positions 356–441 (KRIATSVVNE…PIRFRWRSKS (86 aa)) constitute a KH-like domain.

The protein belongs to the TRAFAC class TrmE-Era-EngA-EngB-Septin-like GTPase superfamily. EngA (Der) GTPase family. In terms of assembly, associates with the 50S ribosomal subunit.

Functionally, GTPase that plays an essential role in the late steps of ribosome biogenesis. The sequence is that of GTPase Der from Synechococcus sp. (strain JA-3-3Ab) (Cyanobacteria bacterium Yellowstone A-Prime).